The sequence spans 262 residues: Steroid 5-alpha-reductase DET2 (262 aa).

Helical transmembrane passes span 13 to 33 (CLLT…FLQA), 51 to 71 (IAWF…FPFG), 79 to 99 (SLLL…IYPL), 113 to 133 (FPIT…YIQA), 148 to 168 (WFWW…YINI), and 205 to 225 (AIEW…GFFL).

It belongs to the steroid 5-alpha reductase family.

The protein resides in the membrane. The enzyme catalyses a 3-oxo-5alpha-steroid + NADP(+) = a 3-oxo-Delta(4)-steroid + NADPH + H(+). The catalysed reaction is 5alpha-campestan-3-one + NADP(+) = campest-4-en-3-one + NADPH + H(+). It catalyses the reaction (22S,24R)-22-hydroxy-5alpha-ergostan-3-one + NADP(+) = (22S)-22-hydroxycampest-4-en-3-one + NADPH + H(+). It carries out the reaction 3-dehydro-6-deoxoteasterone + NADP(+) = (22R,23R)-22,23-dihydroxycampest-4-en-3-one + NADPH + H(+). It participates in plant hormone biosynthesis; brassinosteroid biosynthesis. With respect to regulation, inhibited by the 4-azasteroids 4-MA. Involved in a reduction step in the biosynthesis of the plant steroid, brassinolide (BL); acts at the second step in brassinolide biosynthesis in the 5alpha-reduction of (24R)- 24-methylcholest-4-en-3-one, which is further modified to form campestanol. Can use progesterone, testosterone, androstenedione and campestenone as substrate. Also catalyzes the conversion of campest-4-en-3-one (campesta-4-en-3-one, 4-en-3-one) to campest-3-one (campesta-3-one, 3-one), of (22S,24R)-22-hydroxyergost-4-en-3-one (22-hydroxy-campesta-4-en-3-one, 22-OH-4-en-3-one) to (22S,24R)-22-hydroxy-5alpha-ergostan-3-one (22-hydroxy-campesta-3-one, 22-OH-3-one), and of (22R,23R)-22,23-dihydroxy-5alpha-campestan-3-one (22,23,diOH-4-en-3-one) to (22R,23R)-22,23-dihydroxycampest-4-en-3-one (6-deoxo3DT). Required for the brassinosteroid- (BR) dependent regulation of seed size and shape as well as embryo development. This is Steroid 5-alpha-reductase DET2 from Arabidopsis thaliana (Mouse-ear cress).